A 95-amino-acid chain; its full sequence is Large ribosomal subunit protein bL28 (95 aa).

Belongs to the bacterial ribosomal protein bL28 family.

This chain is Large ribosomal subunit protein bL28, found in Orientia tsutsugamushi (strain Ikeda) (Rickettsia tsutsugamushi).